The following is a 587-amino-acid chain: Aspartate--tRNA(Asp/Asn) ligase (587 aa).

Position 173 (E173) interacts with L-aspartate. Residues 197–200 form an aspartate region; sequence QLFK. R219 contributes to the L-aspartate binding site. Residues 219 to 221 and Q228 each bind ATP; that span reads RDE. Residue H448 participates in L-aspartate binding. E481 contributes to the ATP binding site. R488 is a binding site for L-aspartate. Residue 533–536 coordinates ATP; the sequence is GLDR.

Belongs to the class-II aminoacyl-tRNA synthetase family. Type 1 subfamily. As to quaternary structure, homodimer.

It is found in the cytoplasm. The catalysed reaction is tRNA(Asx) + L-aspartate + ATP = L-aspartyl-tRNA(Asx) + AMP + diphosphate. Aspartyl-tRNA synthetase with relaxed tRNA specificity since it is able to aspartylate not only its cognate tRNA(Asp) but also tRNA(Asn). Reaction proceeds in two steps: L-aspartate is first activated by ATP to form Asp-AMP and then transferred to the acceptor end of tRNA(Asp/Asn). This Alcanivorax borkumensis (strain ATCC 700651 / DSM 11573 / NCIMB 13689 / SK2) protein is Aspartate--tRNA(Asp/Asn) ligase.